Consider the following 207-residue polypeptide: 2,3-bisphosphoglycerate-dependent phosphoglycerate mutase (207 aa).

Substrate contacts are provided by residues 10 to 17, 23 to 24, R62, 89 to 92, K100, 116 to 117, and 160 to 161; these read RHGQSEWN, TG, ERDY, RR, and GN. H11 functions as the Tele-phosphohistidine intermediate in the catalytic mechanism. Residue E89 is the Proton donor/acceptor of the active site.

The protein belongs to the phosphoglycerate mutase family. BPG-dependent PGAM subfamily. Homodimer.

It catalyses the reaction (2R)-2-phosphoglycerate = (2R)-3-phosphoglycerate. It functions in the pathway carbohydrate degradation; glycolysis; pyruvate from D-glyceraldehyde 3-phosphate: step 3/5. Catalyzes the interconversion of 2-phosphoglycerate and 3-phosphoglycerate. The sequence is that of 2,3-bisphosphoglycerate-dependent phosphoglycerate mutase from Afipia carboxidovorans (strain ATCC 49405 / DSM 1227 / KCTC 32145 / OM5) (Oligotropha carboxidovorans).